The following is a 1259-amino-acid chain: Cingulin (1259 aa).

The segment at 9 to 324 (MADQPIPVGQ…EKFPSLQAQP (316 aa)) is head. A ZIM motif is present at residues 41–55 (QDSYGVAVRVQGIDG). A compositionally biased stretch (basic and acidic residues) spans 69–79 (SSYDYDRHYSE). 5 disordered regions span residues 69-151 (SSYD…IDTK), 169-232 (VRGR…RQSL), 317-338 (FPSLQAQPGEDTRSLGSQKKEL), 941-969 (KSRREIGEAQKQAKEKTAEAERHQFNSSR), and 1192-1259 (REME…TSSC). Over residues 80-100 (RSSTLDTAYSQSSRESAWSRG) the composition is skewed to polar residues. The span at 117–127 (SATSQQSTSAS) shows a compositional bias: low complexity. The segment covering 128–145 (NKTNKNGLSTSSFSNQSS) has biased composition (polar residues). Residues 179 to 204 (ALKDERKRSQSLDGRKNYQDTADSRE) show a composition bias toward basic and acidic residues. Residues 220–229 (VSSANRSFAR) are compositionally biased toward polar residues. Positions 325–1218 (GEDTRSLGSQ…KTMEKESKRK (894 aa)) form a coiled coil. The segment covering 326 to 338 (EDTRSLGSQKKEL) has biased composition (basic and acidic residues). Residues 1220–1259 (IRPAHNDDDDLSSDGEYGGSYDPSSITSLLTESNLQTSSC) are tail. The segment covering 1241–1259 (DPSSITSLLTESNLQTSSC) has biased composition (polar residues).

Belongs to the cingulin family. In terms of assembly, parallel homodimer. Interacts with TJP1/ZO1 and TJP2/ZO2.

The protein localises to the cell junction. Its subcellular location is the tight junction. Its function is as follows. Probably plays a role in the formation and regulation of the tight junction (TJ) paracellular permeability barrier, possibly by linking ZO proteins to the actomyosin cytoskeleton. The sequence is that of Cingulin from Xenopus tropicalis (Western clawed frog).